A 187-amino-acid chain; its full sequence is MGTFLLLMAEASAVGGELAEGGAEGGFGLNTNILDTNLINLAIIITVLFVFGRKVLGNTLKTRRENIETAIKNAEQRAADAAKQLKEAQQKLEQAQAEAERIKKSAQDNAQTAGQAILAQAAVDIERLQEAGAADLNAELDRAIAQLRQRVVALALQKVESELQGGIADDAQKILIDRSIAQLGGEV.

A helical transmembrane segment spans residues 32-52 (NILDTNLINLAIIITVLFVFG).

It belongs to the ATPase B chain family. In terms of assembly, F-type ATPases have 2 components, F(1) - the catalytic core - and F(0) - the membrane proton channel. F(1) has five subunits: alpha(3), beta(3), gamma(1), delta(1), epsilon(1). F(0) has four main subunits: a(1), b(1), b'(1) and c(10-14). The alpha and beta chains form an alternating ring which encloses part of the gamma chain. F(1) is attached to F(0) by a central stalk formed by the gamma and epsilon chains, while a peripheral stalk is formed by the delta, b and b' chains.

The protein resides in the cellular thylakoid membrane. F(1)F(0) ATP synthase produces ATP from ADP in the presence of a proton or sodium gradient. F-type ATPases consist of two structural domains, F(1) containing the extramembraneous catalytic core and F(0) containing the membrane proton channel, linked together by a central stalk and a peripheral stalk. During catalysis, ATP synthesis in the catalytic domain of F(1) is coupled via a rotary mechanism of the central stalk subunits to proton translocation. Functionally, component of the F(0) channel, it forms part of the peripheral stalk, linking F(1) to F(0). The sequence is that of ATP synthase subunit b from Trichormus variabilis (strain ATCC 29413 / PCC 7937) (Anabaena variabilis).